The sequence spans 346 residues: Putative cytochrome bd menaquinol oxidase subunit II (346 aa).

Transmembrane regions (helical) follow at residues 7-27, 63-83, 87-107, 119-139, 164-184, 201-221, 236-256, 269-289, and 312-332; these read ALIA…MATM, VFIV…TFVL, LLIP…FLVF, YISG…LPVT, AYSF…LLLA, KSAL…MVTM, FSWI…LFLP, LALV…GRAH, and ALFA…FFFW.

The protein belongs to the cytochrome ubiquinol oxidase subunit 2 family.

The protein localises to the cell membrane. Its function is as follows. May have a role in sporulation. Can compensate for the loss of cytochrome aa3. The sequence is that of Putative cytochrome bd menaquinol oxidase subunit II (ythB) from Bacillus subtilis (strain 168).